The following is a 613-amino-acid chain: Dihydroxy-acid dehydratase (613 aa).

Asp-81 contributes to the Mg(2+) binding site. Cys-122 is a binding site for [2Fe-2S] cluster. Residues Asp-123 and Lys-124 each coordinate Mg(2+). An N6-carboxylysine modification is found at Lys-124. Cys-195 serves as a coordination point for [2Fe-2S] cluster. Residue Glu-491 coordinates Mg(2+). Catalysis depends on Ser-517, which acts as the Proton acceptor.

Belongs to the IlvD/Edd family. Homodimer. Requires [2Fe-2S] cluster as cofactor. Mg(2+) serves as cofactor.

It catalyses the reaction (2R)-2,3-dihydroxy-3-methylbutanoate = 3-methyl-2-oxobutanoate + H2O. The enzyme catalyses (2R,3R)-2,3-dihydroxy-3-methylpentanoate = (S)-3-methyl-2-oxopentanoate + H2O. It functions in the pathway amino-acid biosynthesis; L-isoleucine biosynthesis; L-isoleucine from 2-oxobutanoate: step 3/4. The protein operates within amino-acid biosynthesis; L-valine biosynthesis; L-valine from pyruvate: step 3/4. Functionally, functions in the biosynthesis of branched-chain amino acids. Catalyzes the dehydration of (2R,3R)-2,3-dihydroxy-3-methylpentanoate (2,3-dihydroxy-3-methylvalerate) into 2-oxo-3-methylpentanoate (2-oxo-3-methylvalerate) and of (2R)-2,3-dihydroxy-3-methylbutanoate (2,3-dihydroxyisovalerate) into 2-oxo-3-methylbutanoate (2-oxoisovalerate), the penultimate precursor to L-isoleucine and L-valine, respectively. The polypeptide is Dihydroxy-acid dehydratase (Vibrio atlanticus (strain LGP32) (Vibrio splendidus (strain Mel32))).